Here is a 549-residue protein sequence, read N- to C-terminus: Glucose-6-phosphate isomerase (549 aa).

The Proton donor role is filled by Glu355. Catalysis depends on residues His386 and Lys514.

This sequence belongs to the GPI family.

It localises to the cytoplasm. The enzyme catalyses alpha-D-glucose 6-phosphate = beta-D-fructose 6-phosphate. The protein operates within carbohydrate biosynthesis; gluconeogenesis. Its pathway is carbohydrate degradation; glycolysis; D-glyceraldehyde 3-phosphate and glycerone phosphate from D-glucose: step 2/4. Functionally, catalyzes the reversible isomerization of glucose-6-phosphate to fructose-6-phosphate. The protein is Glucose-6-phosphate isomerase of Cronobacter sakazakii (strain ATCC BAA-894) (Enterobacter sakazakii).